Here is a 233-residue protein sequence, read N- to C-terminus: MKLTTSVALLAAAGAQAHYTFPQTDINGQLSGEWVTIRETTNHYSHGPVTDVTSDQIRCYELNPGTPAPQIATVQAGGTVTFTVDPSIQHPGPLQFYMAKAPSGQTAATFQGTGNVWFKIYEDGPSGLGTSNITWPSSGKTEVSVKIPSCIAPGDYLLRVEHIALHSASTVGGAQFYLACAQLTVTGGTGTLNTGELVAFPGAYSATDPGILFQLYWPIPTSYTNPGPAPVSC.

The signal sequence occupies residues 1-17 (MKLTTSVALLAAAGAQA). Residues His-18 and His-90 each contribute to the Cu(2+) site. Cystine bridges form between Cys-59-Cys-180 and Cys-150-Cys-233. N-linked (GlcNAc...) asparagine glycosylation is present at Asn-132. 2 residues coordinate O2: His-166 and Gln-175. A Cu(2+)-binding site is contributed by Tyr-177.

It belongs to the polysaccharide monooxygenase AA9 family. Cu(2+) serves as cofactor.

It localises to the secreted. It carries out the reaction [(1-&gt;4)-beta-D-glucosyl]n+m + reduced acceptor + O2 = 4-dehydro-beta-D-glucosyl-[(1-&gt;4)-beta-D-glucosyl]n-1 + [(1-&gt;4)-beta-D-glucosyl]m + acceptor + H2O.. Functionally, lytic polysaccharide monooxygenase (LPMO) that depolymerizes crystalline and amorphous polysaccharides via the oxidation of scissile alpha- or beta-(1-4)-glycosidic bonds, yielding C1 and C4 oxidation products. Catalysis by LPMOs requires the reduction of the active-site copper from Cu(II) to Cu(I) by a reducing agent and H(2)O(2) or O(2) as a cosubstrate. Shows endoglucanase activity on tamarind xyloglucan, as well as on beechwood xylan when combined with phosphoric acid swollen cellulose (PASC). Shows no activity on wheat arabinoxylan, konjac glucomannan, acetylated spruce galactoglucomannan, or cellopentaose. The chain is AA9 family lytic polysaccharide monooxygenase A from Thermothielavioides terrestris (strain ATCC 38088 / NRRL 8126) (Thielavia terrestris).